The chain runs to 945 residues: UvrABC system protein A (945 aa).

An ATP-binding site is contributed by 31-38 (GLSGSGKS). The segment at 254 to 281 (CPVCGHSISELEPKLFSFNNPAGACPTC) adopts a C4-type zinc-finger fold. 2 consecutive ABC transporter domains span residues 310–587 (WDRR…PDSL) and 607–937 (RDKK…HFLK). 640 to 647 (GVSGSGKS) is an ATP binding site. The segment at 740–766 (CEACQGDGVIKVEMHFLPDIYVPCDVC) adopts a C4-type zinc-finger fold.

Belongs to the ABC transporter superfamily. UvrA family. As to quaternary structure, forms a heterotetramer with UvrB during the search for lesions.

It localises to the cytoplasm. Functionally, the UvrABC repair system catalyzes the recognition and processing of DNA lesions. UvrA is an ATPase and a DNA-binding protein. A damage recognition complex composed of 2 UvrA and 2 UvrB subunits scans DNA for abnormalities. When the presence of a lesion has been verified by UvrB, the UvrA molecules dissociate. The chain is UvrABC system protein A from Pseudomonas aeruginosa (strain ATCC 15692 / DSM 22644 / CIP 104116 / JCM 14847 / LMG 12228 / 1C / PRS 101 / PAO1).